A 247-amino-acid polypeptide reads, in one-letter code: Large ribosomal subunit protein uL30 (247 aa).

An N-acetylmethionine modification is found at Met-1. 4 consecutive repeat copies span residues 7 to 17 (KKKVPAVPETL), 18 to 29 (KKKRRNFAELKI), 30 to 41 (KRLRKKFAQKML), and 42 to 53 (RKARRKLIYEKA). The interval 7–53 (KKKVPAVPETLKKKRRNFAELKIKRLRKKFAQKMLRKARRKLIYEKA) is 4 X 12 AA tandem repeats. Thr-16 bears the Phosphothreonine mark. Lys-123 is subject to N6-acetyllysine. Lys-126 is subject to N6-succinyllysine. Phosphotyrosine is present on Tyr-138.

It belongs to the universal ribosomal protein uL30 family. Component of the large ribosomal subunit. Homodimer. Interacts with DHX33.

Its subcellular location is the cytoplasm. In terms of biological role, component of the large ribosomal subunit. The ribosome is a large ribonucleoprotein complex responsible for the synthesis of proteins in the cell. Binds to G-rich structures in 28S rRNA and in mRNAs. Plays a regulatory role in the translation apparatus; inhibits cell-free translation of mRNAs. This Macaca fascicularis (Crab-eating macaque) protein is Large ribosomal subunit protein uL30 (RPL7).